Reading from the N-terminus, the 196-residue chain is Elongation factor Ts (196 aa).

Positions 80 to 83 (TDFV) are involved in Mg(2+) ion dislocation from EF-Tu.

Belongs to the EF-Ts family.

It is found in the cytoplasm. Associates with the EF-Tu.GDP complex and induces the exchange of GDP to GTP. It remains bound to the aminoacyl-tRNA.EF-Tu.GTP complex up to the GTP hydrolysis stage on the ribosome. This chain is Elongation factor Ts, found in Thermus thermophilus (strain ATCC BAA-163 / DSM 7039 / HB27).